We begin with the raw amino-acid sequence, 332 residues long: D-amino acid oxidase (332 aa).

FAD is bound by residues Ala-8, Gly-9, Ile-10, Thr-39, Thr-40, Ala-45, Gly-46, Leu-47, Val-161, and Ser-180. Residues Tyr-218 and Arg-274 each coordinate D-proline. D-serine-binding residues include Tyr-218 and Arg-274. FAD contacts are provided by Arg-274, Gly-305, Gly-306, Gly-308, and Thr-310. Residue Gly-306 participates in D-proline binding. Gly-306 lines the D-serine pocket. Positions 330 to 332 (AKL) match the Microbody targeting signal motif.

This sequence belongs to the DAMOX/DASOX family. FAD serves as cofactor.

The protein localises to the peroxisome matrix. The enzyme catalyses a D-alpha-amino acid + O2 + H2O = a 2-oxocarboxylate + H2O2 + NH4(+). It catalyses the reaction D-alanine + O2 + H2O = pyruvate + H2O2 + NH4(+). The catalysed reaction is D-arginine + O2 + H2O = 5-guanidino-2-oxopentanoate + H2O2 + NH4(+). It carries out the reaction D-asparagine + O2 + H2O = 2-oxosuccinamate + H2O2 + NH4(+). The enzyme catalyses D-cysteine + O2 + H2O = 2-oxo-3-sulfanylpropanoate + H2O2 + NH4(+). It catalyses the reaction D-glutamine + O2 + H2O = 2-oxoglutaramate + H2O2 + NH4(+). The catalysed reaction is D-isoleucine + O2 + H2O = (R)-3-methyl-2-oxopentanoate + H2O2 + NH4(+). It carries out the reaction D-leucine + O2 + H2O = 4-methyl-2-oxopentanoate + H2O2 + NH4(+). The enzyme catalyses D-lysine + O2 + H2O = 6-amino-2-oxohexanoate + H2O2 + NH4(+). It catalyses the reaction D-methionine + O2 + H2O = 4-methylsulfanyl-2-oxobutanoate + H2O2 + NH4(+). The catalysed reaction is D-phenylalanine + O2 + H2O = 3-phenylpyruvate + H2O2 + NH4(+). It carries out the reaction D-proline + O2 = 1-pyrroline-2-carboxylate + H2O2. The enzyme catalyses D-valine + O2 + H2O = 3-methyl-2-oxobutanoate + H2O2 + NH4(+). It catalyses the reaction D-histidine + O2 + H2O = 3-(imidazol-5-yl)pyruvate + H2O2 + NH4(+). The catalysed reaction is D-tyrosine + O2 + H2O = 3-(4-hydroxyphenyl)pyruvate + H2O2 + NH4(+). It carries out the reaction D-serine + O2 + H2O = 3-hydroxypyruvate + H2O2 + NH4(+). The enzyme catalyses D-threonine + O2 + H2O = (S)-3-hydroxy-2-oxobutanoate + H2O2 + NH4(+). It catalyses the reaction D-tryptophan + O2 + H2O = indole-3-pyruvate + H2O2 + NH4(+). Functionally, catalyzes the oxidative deamination of D-amino acids with broad substrate specificity. Could be responsible for the degradation of diet-derived D-alanine in the intestine. Maintains the asexual state of worms and represses early ovarian development. Following sexual induction, the enzyme is required for differentiation of oogonia into oocytes in the developing ovaries. The chain is D-amino acid oxidase from Dugesia ryukyuensis (Freshwater planarian flatworm).